Reading from the N-terminus, the 547-residue chain is Chorismate synthase (547 aa).

Active-site residues include His-17, His-104, and Asp-500.

Belongs to the chorismate synthase family.

The protein localises to the cytoplasm. The protein resides in the cytosol. It carries out the reaction 5-O-(1-carboxyvinyl)-3-phosphoshikimate = chorismate + phosphate. The catalysed reaction is FMNH2 + NADP(+) = FMN + NADPH + 2 H(+). Its pathway is metabolic intermediate biosynthesis; chorismate biosynthesis; chorismate from D-erythrose 4-phosphate and phosphoenolpyruvate: step 7/7. In terms of biological role, bifunctional chorismate synthase and flavin reductase. Catalyzes the conversion of 5-enolpyruvylshikimate 3-phosphate (EPSP) to form chorismate. Acts also as a flavin reductase (FR) able to generate reduced flavin mononucleotide in the presence of NADPH. In Plasmodium vivax (strain Salvador I), this protein is Chorismate synthase.